We begin with the raw amino-acid sequence, 1088 residues long: PAN2-PAN3 deadenylation complex catalytic subunit pan2 (1088 aa).

4 WD repeats span residues 16–56, 136–175, 178–224, and 270–309; these read VSTC…YTQF, HKDK…PVNK, AHTG…SLVP, and PLTS…SFSD. The segment at 309 to 443 is linker; sequence DLKLPIQLPN…EDTISGPDSI (135 aa). In terms of domain architecture, USP spans 443 to 814; that stretch reads IPKFYQRPVI…IPIIVYYEKL (372 aa). An Exonuclease domain is found at 860 to 1033; it reads VGIDSEFVAL…EDALTALKLY (174 aa). A divalent metal cation-binding residues include Asp863, Glu865, Asp972, and Asp1025.

Belongs to the peptidase C19 family. PAN2 subfamily. Forms a heterotrimer with an asymmetric homodimer of the regulatory subunit ppk26/pan3 to form the poly(A)-nuclease (PAN) deadenylation complex. Requires a divalent metal cation as cofactor.

Its subcellular location is the cytoplasm. The enzyme catalyses Exonucleolytic cleavage of poly(A) to 5'-AMP.. Its activity is regulated as follows. Positively regulated by the regulatory subunit ppk26/pan3. Functionally, catalytic subunit of the poly(A)-nuclease (PAN) deadenylation complex, one of two cytoplasmic mRNA deadenylases involved in mRNA turnover. PAN specifically shortens poly(A) tails of RNA and the activity is stimulated by poly(A)-binding protein pab1. PAN deadenylation is followed by rapid degradation of the shortened mRNA tails by the CCR4-NOT complex. Deadenylated mRNAs are then degraded by two alternative mechanisms, namely exosome-mediated 3'-5' exonucleolytic degradation, or deadenylation-dependent mRNA decaping and subsequent 5'-3' exonucleolytic degradation by xrn1. May also be involved in post-transcriptional maturation of mRNA poly(A) tails. The chain is PAN2-PAN3 deadenylation complex catalytic subunit pan2 from Schizosaccharomyces pombe (strain 972 / ATCC 24843) (Fission yeast).